The sequence spans 641 residues: 1-deoxy-D-xylulose-5-phosphate synthase (641 aa).

Thiamine diphosphate contacts are provided by residues H79 and 120 to 122 (AHS). Residue D151 coordinates Mg(2+). Residues 152–153 (GA), N180, Y290, and E372 each bind thiamine diphosphate. N180 serves as a coordination point for Mg(2+).

The protein belongs to the transketolase family. DXPS subfamily. As to quaternary structure, homodimer. Mg(2+) is required as a cofactor. Requires thiamine diphosphate as cofactor.

The enzyme catalyses D-glyceraldehyde 3-phosphate + pyruvate + H(+) = 1-deoxy-D-xylulose 5-phosphate + CO2. It functions in the pathway metabolic intermediate biosynthesis; 1-deoxy-D-xylulose 5-phosphate biosynthesis; 1-deoxy-D-xylulose 5-phosphate from D-glyceraldehyde 3-phosphate and pyruvate: step 1/1. Catalyzes the acyloin condensation reaction between C atoms 2 and 3 of pyruvate and glyceraldehyde 3-phosphate to yield 1-deoxy-D-xylulose-5-phosphate (DXP). The sequence is that of 1-deoxy-D-xylulose-5-phosphate synthase from Bradyrhizobium sp. (strain ORS 278).